The sequence spans 25 residues: Flagellar filament outer layer protein (25 aa).

In terms of assembly, the flagellum consists of an outer layer composed of repeating units of FlaA around a core that contains several antigenically related polypeptides.

The protein resides in the periplasmic flagellum. The protein localises to the periplasm. Functionally, component of the outer layer of the flagella. The chain is Flagellar filament outer layer protein (flaA) from Treponema phagedenis.